Here is a 497-residue protein sequence, read N- to C-terminus: MKFLLTTAFLILISLWVEEAYSKEKSSKKGKGKKKQYLCPSQQSAEDLARVPANSTSNILNRLLVSYDPRIRPNFKGIPVDVVVNIFINSFGSIQETTMDYRVNIFLRQKWNDPRLKLPSDFRGSDALTVDPTMYKCLWKPDLFFANEKSANFHDVTQENILLFIFRDGDVLVSMRLSITLSCPLDLTLFPMDTQRCKMQLESFGYTTDDLRFIWQSGDPVQLEKIALPQFDIKKEDIEYGNCTKYYKGTGYYTCVEVIFTLRRQVGFYMMGVYAPTLLIVVLSWLSFWINPDASAARVPLGIFSVLSLASECTTLAAELPKVSYVKALDVWLIACLLFGFASLVEYAVVQVMLNNPKRVEAEKARIAKAEQADGKGGNVAKKNTVNGTGTPVHISTLQVGETRCKKVCTSKSDLRSNDFSIVGSLPRDFELSNYDCYGKPIEVNNGLGKSQAKNNKKPPPAKPVIPTAAKRIDLYARALFPFCFLFFNVIYWSIYL.

The N-terminal stretch at 1–22 (MKFLLTTAFLILISLWVEEAYS) is a signal peptide. Residues 23–268 (KEKSSKKGKG…IFTLRRQVGF (246 aa)) are Extracellular-facing. Asn-54 carries N-linked (GlcNAc...) asparagine glycosylation. Residues Arg-108 and Ser-174 each contribute to the glycine site. A disulfide bridge links Cys-183 with Cys-197. An N-linked (GlcNAc...) asparagine glycan is attached at Asn-242. A disulfide bridge connects residues Cys-243 and Cys-255. A glycine-binding site is contributed by Thr-250. The chain crosses the membrane as a helical span at residues 269-289 (YMMGVYAPTLLIVVLSWLSFW). Topologically, residues 290 to 294 (INPDA) are cytoplasmic. A helical transmembrane segment spans residues 295–315 (SAARVPLGIFSVLSLASECTT). The Extracellular portion of the chain corresponds to 316–327 (LAAELPKVSYVK). A helical membrane pass occupies residues 328 to 349 (ALDVWLIACLLFGFASLVEYAV). The Cytoplasmic segment spans residues 350 to 472 (VQVMLNNPKR…KPVIPTAAKR (123 aa)). Thr-391 carries the post-translational modification Phosphothreonine. Residues 473–496 (IDLYARALFPFCFLFFNVIYWSIY) traverse the membrane as a helical segment.

It belongs to the ligand-gated ion channel (TC 1.A.9) family. Glycine receptor (TC 1.A.9.3) subfamily. GLRB sub-subfamily. As to quaternary structure, forms heteropentamers with glycin receptor alpha subunits. Heteropentamers with GLRA1 can be composed of two GLRA1 and three GLRB subunits, or three GLRA1 and two GLRB subunits, or four GLRA1 subunits and one GLRB subunit. Forms heteropentamers with GLRA2. Functional GLRB-GLRA2 heteropentamers contain four GLRA2 subunits and one GLRB subunit, although alternative subunit composition cannot be excluded. Forms a heteropentamer with GLRA3. Interacts with GPHN.

The protein localises to the postsynaptic cell membrane. Its subcellular location is the synapse. The protein resides in the cell projection. It localises to the dendrite. It is found in the cell membrane. The protein localises to the cytoplasm. It carries out the reaction chloride(in) = chloride(out). Channel opening is triggered by extracellular glycine. Heteropentameric channels composed of GLRB and GLRA1 are activated by lower glycine levels than homopentameric GLRA1. In terms of biological role, subunit of heteromeric glycine-gated chloride channels. Plays an important role in the down-regulation of neuronal excitability. Contributes to the generation of inhibitory postsynaptic currents. This is Glycine receptor subunit beta (GLRB) from Homo sapiens (Human).